The primary structure comprises 123 residues: Small ribosomal subunit protein uS12 (123 aa).

A disordered region spans residues Met1–Pro22. The residue at position 89 (Asp89) is a 3-methylthioaspartic acid. Residues Gly100 to Lys123 form a disordered region. A compositionally biased stretch (basic residues) spans Asn111 to Lys123.

The protein belongs to the universal ribosomal protein uS12 family. In terms of assembly, part of the 30S ribosomal subunit. Contacts proteins S8 and S17. May interact with IF1 in the 30S initiation complex.

With S4 and S5 plays an important role in translational accuracy. In terms of biological role, interacts with and stabilizes bases of the 16S rRNA that are involved in tRNA selection in the A site and with the mRNA backbone. Located at the interface of the 30S and 50S subunits, it traverses the body of the 30S subunit contacting proteins on the other side and probably holding the rRNA structure together. The combined cluster of proteins S8, S12 and S17 appears to hold together the shoulder and platform of the 30S subunit. This Pseudomonas putida (strain GB-1) protein is Small ribosomal subunit protein uS12.